Consider the following 377-residue polypeptide: DNA-directed RNA polymerase subunit alpha (377 aa).

The tract at residues 1 to 259 is alpha N-terminal domain (alpha-NTD); that stretch reads MSDSSHNLLY…KHFSVFEKMD (259 aa). The tract at residues 279-377 is alpha C-terminal domain (alpha-CTD); the sequence is ILHKLVLGIN…KIRSSKNTKG (99 aa).

The protein belongs to the RNA polymerase alpha chain family. As to quaternary structure, homodimer. The RNAP catalytic core consists of 2 alpha, 1 beta, 1 beta' and 1 omega subunit. When a sigma factor is associated with the core the holoenzyme is formed, which can initiate transcription.

The enzyme catalyses RNA(n) + a ribonucleoside 5'-triphosphate = RNA(n+1) + diphosphate. Functionally, DNA-dependent RNA polymerase catalyzes the transcription of DNA into RNA using the four ribonucleoside triphosphates as substrates. This Chlamydia trachomatis serovar L2 (strain ATCC VR-902B / DSM 19102 / 434/Bu) protein is DNA-directed RNA polymerase subunit alpha.